Consider the following 259-residue polypeptide: Global transcriptional regulator CodY (259 aa).

The interval 1–155 (MNLLAKTRKL…GATVVGMEIL (155 aa)) is GAF domain. A DNA-binding region (H-T-H motif) is located at residues 203–222 (ASKIADRVGITRSVIVNALR).

It belongs to the CodY family.

The protein localises to the cytoplasm. In terms of biological role, DNA-binding global transcriptional regulator which is involved in the adaptive response to starvation and acts by directly or indirectly controlling the expression of numerous genes in response to nutrient availability. During rapid exponential growth, CodY is highly active and represses genes whose products allow adaptation to nutrient depletion. The sequence is that of Global transcriptional regulator CodY from Exiguobacterium sibiricum (strain DSM 17290 / CCUG 55495 / CIP 109462 / JCM 13490 / 255-15).